The following is a 304-amino-acid chain: MRLPIFLDTDPGIDDAVAIAAAIFAPELDLQLMTTVAGNVSVEKTTRNALQLLHFWNAEIPLAQGAAVPLVRAPRDAASVHGESGMAGYDFVEHNRKPLGIPALLAIRDALMRAPEPVTLVAIGPLTNIALLLSQCPECKPYIRRLVIMGGSAGRGNCTPNAEFNIAADPEAAACVFRSGIEIVMCGLDVTNQAILTPDYLSTLPQLNRTGKMLHALFSHYRSGSMQSGLRMHDLCAIAWLVRPDLFTLKPCFVAVETQGEFTSGTTVVDIDGCLGKPANVQVALDLDVKGFQQWVAEVLALAS.

His233 is an active-site residue.

This sequence belongs to the IUNH family. RihC subfamily.

Its function is as follows. Hydrolyzes both purine and pyrimidine ribonucleosides with a broad-substrate specificity. The polypeptide is Non-specific ribonucleoside hydrolase RihC (Escherichia coli (strain SE11)).